The following is a 486-amino-acid chain: Membrane-bound lytic murein transglycosylase F (486 aa).

The first 21 residues, 1-21, serve as a signal peptide directing secretion; that stretch reads MTRIKLSYFTIGLVALLLALA. The non-LT domain stretch occupies residues 22-268; that stretch reads LWPNIPWRNG…RLEEKYLGHV (247 aa). The interval 269 to 486 is LT domain; that stretch reads GSFDYVDTKT…VVGPGWSIGD (218 aa). The active site involves E313.

In the N-terminal section; belongs to the bacterial solute-binding protein 3 family. It in the C-terminal section; belongs to the transglycosylase Slt family.

Its subcellular location is the cell outer membrane. It catalyses the reaction Exolytic cleavage of the (1-&gt;4)-beta-glycosidic linkage between N-acetylmuramic acid (MurNAc) and N-acetylglucosamine (GlcNAc) residues in peptidoglycan, from either the reducing or the non-reducing ends of the peptidoglycan chains, with concomitant formation of a 1,6-anhydrobond in the MurNAc residue.. Its function is as follows. Murein-degrading enzyme that degrades murein glycan strands and insoluble, high-molecular weight murein sacculi, with the concomitant formation of a 1,6-anhydromuramoyl product. Lytic transglycosylases (LTs) play an integral role in the metabolism of the peptidoglycan (PG) sacculus. Their lytic action creates space within the PG sacculus to allow for its expansion as well as for the insertion of various structures such as secretion systems and flagella. The polypeptide is Membrane-bound lytic murein transglycosylase F (Yersinia pseudotuberculosis serotype I (strain IP32953)).